The chain runs to 754 residues: MTLNQLLQKLEATSPILQANFGIERESLRVDRQGQLVHTPHPSCLGARSFHPYIQTDFCEFQMELITPVAKSTTEARRFLGAITDVAGRSIATDEVLWPLSMPPRLKAEEIQVAQLENDFERHYRNYLAEKYGTKLQAISGIHYNMELGKDLVEALFQESDQTDMIAFKNALYLKLAQNYLRYRWVITYLFGASPIAEQGFFDQEVPEPMRSFRNSDHGYVNKEEIQVSFVSLEDYVSAIETYIEQGDLIAEKEFYSAVRFRGQKVNRSFLDKGITYLEFRNFDLNPFERIGISQTTMDTVHLLILAFLWLDSPENVDQALAQGHALNEKIALSHPLEPLPSEAKTQDIVTALDQLVQHFGLGDYHQDLVKQVKAAFADPNQTLSAQLLPYIKDKSLAEFALNKALAYHDYDWTAHYALKGYEEMELSTQMLLFDAIQKGIHFEILDEQDQFLKLWHQDHVEYVKNGNMTSKDNYVVPLAMANKTVTKKILADAGFPVPSGDEFTSLEEGLAYYPLIKDKQIVVKPKSTNFGLGISIFQEPASLDNYQKALEIAFAEDTSVLVEEFIPGTEYRFFILDGRCEAVLLRVAANVIGDGKHTIRELVAQKNANPLRGRDHRSPLEIIELGDIEQLMLAQQGYTPDDILPEGKKVNLRRNSNISTGGDSIDVTETMDSSYQELAAAMATSMGAWACGVDLIIPDETQIATKENPHCTCIELNFNPSMYMHTYCAEGPGQAITTKILDKLFPEIVAGQT.

The glutamate--cysteine ligase stretch occupies residues 1–332 (MTLNQLLQKL…QGHALNEKIA (332 aa)). Positions 488 to 746 (KKILADAGFP…ITTKILDKLF (259 aa)) constitute an ATP-grasp domain. 515–573 (PLIKDKQIVVKPKSTNFGLGISIFQEPASLDNYQKALEIAFAEDTSVLVEEFIPGTEYR) is an ATP binding site. Positions 695, 716, and 718 each coordinate Mg(2+). Residues Asp695, Glu716, and Asn718 each contribute to the Mn(2+) site.

It in the N-terminal section; belongs to the glutamate--cysteine ligase type 1 family. Type 2 subfamily. In terms of assembly, monomer. Requires Mg(2+) as cofactor. Mn(2+) serves as cofactor.

It carries out the reaction L-cysteine + L-glutamate + ATP = gamma-L-glutamyl-L-cysteine + ADP + phosphate + H(+). It catalyses the reaction gamma-L-glutamyl-L-cysteine + glycine + ATP = glutathione + ADP + phosphate + H(+). It participates in sulfur metabolism; glutathione biosynthesis; glutathione from L-cysteine and L-glutamate: step 1/2. The protein operates within sulfur metabolism; glutathione biosynthesis; glutathione from L-cysteine and L-glutamate: step 2/2. Functionally, synthesizes glutathione from L-glutamate and L-cysteine via gamma-L-glutamyl-L-cysteine. The protein is Glutathione biosynthesis bifunctional protein GshAB of Streptococcus thermophilus (strain CNRZ 1066).